Here is a 258-residue protein sequence, read N- to C-terminus: Indole-3-glycerol phosphate synthase (258 aa).

Belongs to the TrpC family.

It catalyses the reaction 1-(2-carboxyphenylamino)-1-deoxy-D-ribulose 5-phosphate + H(+) = (1S,2R)-1-C-(indol-3-yl)glycerol 3-phosphate + CO2 + H2O. It functions in the pathway amino-acid biosynthesis; L-tryptophan biosynthesis; L-tryptophan from chorismate: step 4/5. The polypeptide is Indole-3-glycerol phosphate synthase (Campylobacter jejuni (strain RM1221)).